Here is a 328-residue protein sequence, read N- to C-terminus: MTLYSKIIGTGSYLPPNRVTNQDLIERLALDGIETSDEWIVSRSGISARHYADADMQSSDLAVEAAKRALDMAKLAANDIDLIILATSTPDFFGGFPSTACVVQRKLGVTNGCAAVDVQAVCSGFVYALATADKFIKSGSHKNVLVIGAEVFSRIIDFKDRTTCVLFGDGSGAVVMTASEEPGVLATKLHADGSYGDILCGPGRISNGVLEGSAFMYMDGQAVFKLAIGLLDKVANEVLQLAKMDASEVDWIVPHQANIRIMQGTAKKLGLSMDKMIVTVDQHGNTSAASIPMALDVGVRDGRIKPGQNVMMEGVGGGFTWGAVLARM.

Active-site residues include C122 and H255. Residues 256-260 (QANIR) form an ACP-binding region. N285 is an active-site residue.

This sequence belongs to the thiolase-like superfamily. FabH family. As to quaternary structure, homodimer.

It is found in the cytoplasm. The catalysed reaction is malonyl-[ACP] + acetyl-CoA + H(+) = 3-oxobutanoyl-[ACP] + CO2 + CoA. Its pathway is lipid metabolism; fatty acid biosynthesis. Catalyzes the condensation reaction of fatty acid synthesis by the addition to an acyl acceptor of two carbons from malonyl-ACP. Catalyzes the first condensation reaction which initiates fatty acid synthesis and may therefore play a role in governing the total rate of fatty acid production. Possesses both acetoacetyl-ACP synthase and acetyl transacylase activities. Its substrate specificity determines the biosynthesis of branched-chain and/or straight-chain of fatty acids. The sequence is that of Beta-ketoacyl-[acyl-carrier-protein] synthase III from Herminiimonas arsenicoxydans.